The following is a 1350-amino-acid chain: Ubiquitin carboxyl-terminal hydrolase 47 (1350 aa).

Residues 111–138 (DGEQPQLTSDESGTADSSGLDDSSQEKF) form a disordered region. A compositionally biased stretch (polar residues) spans 115 to 132 (PQLTSDESGTADSSGLDD). The 376-residue stretch at 173-548 (VGLVNQAMTC…NAYMLMYRLK (376 aa)) folds into the USP domain. Catalysis depends on C182, which acts as the Nucleophile. A disordered region spans residues 409–437 (EDEKSPQTDSCTDSGAENEGSCHSDQMSN). Residues 415–437 (QTDSCTDSGAENEGSCHSDQMSN) are compositionally biased toward polar residues. Catalysis depends on H487, which acts as the Proton acceptor. Disordered regions lie at residues 815–836 (HPRPTARSVGPKGGGDMNPQED) and 859–1000 (SLQQ…ESGK). A compositionally biased stretch (polar residues) spans 859-877 (SLQQHQDGGNGDSSKSTEG). A compositionally biased stretch (basic and acidic residues) spans 916–926 (PEERSDSDVNN). Residues 929–945 (STSSVDSDILSSSHSSD) are compositionally biased toward low complexity. The segment covering 973 to 982 (KANDGKKETW) has biased composition (basic and acidic residues). Residues 983 to 996 (DTAEEDSGTDSEYD) show a composition bias toward acidic residues.

It belongs to the peptidase C19 family. USP47 subfamily.

It localises to the cytoplasm. It carries out the reaction Thiol-dependent hydrolysis of ester, thioester, amide, peptide and isopeptide bonds formed by the C-terminal Gly of ubiquitin (a 76-residue protein attached to proteins as an intracellular targeting signal).. Its function is as follows. Ubiquitin-specific protease that specifically deubiquitinates monoubiquitinated DNA polymerase beta (polb), stabilizing polb thereby playing a role in base-excision repair (BER). The sequence is that of Ubiquitin carboxyl-terminal hydrolase 47 (usp47) from Xenopus laevis (African clawed frog).